We begin with the raw amino-acid sequence, 41 residues long: Large ribosomal subunit protein bL36 (41 aa).

It belongs to the bacterial ribosomal protein bL36 family.

The sequence is that of Large ribosomal subunit protein bL36 from Rickettsia africae (strain ESF-5).